A 201-amino-acid chain; its full sequence is uncharacterized protein (201 aa).

Positions 121 to 141 are disordered; that stretch reads HHRTRPGRGPGPRPGGSAMAG.

This is an uncharacterized protein from Mycobacterium tuberculosis (strain ATCC 25618 / H37Rv).